We begin with the raw amino-acid sequence, 174 residues long: Heat shock protein 22 (174 aa).

A sHSP domain is found at 44–154 (QIARWQEQEF…TLKEREVTIE (111 aa)). Thr152 bears the Phosphothreonine mark. The segment at 152–174 (TIEQTGEPAKKSAEEPNDKAASQ) is disordered. Basic and acidic residues predominate over residues 159–174 (PAKKSAEEPNDKAASQ).

Belongs to the small heat shock protein (HSP20) family.

This is Heat shock protein 22 (Hsp22) from Drosophila melanogaster (Fruit fly).